A 267-amino-acid chain; its full sequence is Apolipoprotein A-I (267 aa).

A signal peptide spans 1–18 (MKATVLTLAVLFLTGSQA). 2 tandem repeats follow at residues 68–89 (LKLLDNWDSVTSTVSKLREQLG) and 90–111 (PVTQEFWDNLEKETEGLRQEMS). Positions 68 to 267 (LKLLDNWDSV…EEYTKKLSTQ (200 aa)) are 10 X approximate tandem repeats. At M110 the chain carries Methionine sulfoxide. The 3; half-length repeat unit spans residues 112 to 122 (KDLEEVKAKVQ). 5 repeat units span residues 123–144 (PYLDDFQKKWQEEMELYRQKVE), 145–166 (PLRAELHEGTRQKLHELHEKLS), 167–188 (PLGEEVRDRARAHVDALRTHLA), 189–210 (PYSDELRQRLAARLEALKENGG), and 211–232 (ARLAEYHAKASEHLSTLSEKAK). The residue at position 136 (M136) is a Methionine sulfoxide. The 9; half-length repeat unit spans residues 233 to 243 (PALEDLRQGLL). The stretch at 244–267 (PVLESFKVSFLSALEEYTKKLSTQ) is repeat 10.

Belongs to the apolipoprotein A1/A4/E family. Homodimer. Interacts with APOA1BP and CLU. Component of a sperm activating protein complex (SPAP), consisting of APOA1, an immunoglobulin heavy chain, an immunoglobulin light chain and albumin. Interacts with NDRG1. Interacts with SCGB3A2. Interacts with NAXE and YJEFN3. Glycosylated. Post-translationally, palmitoylated. In terms of processing, phosphorylation sites are present in the extracellular medium. In terms of tissue distribution, major protein of plasma HDL, also found in chylomicrons.

The protein resides in the secreted. In terms of biological role, participates in the reverse transport of cholesterol from tissues to the liver for excretion by promoting cholesterol efflux from tissues and by acting as a cofactor for the lecithin cholesterol acyltransferase (LCAT). As part of the SPAP complex, activates spermatozoa motility. The chain is Apolipoprotein A-I (APOA1) from Papio hamadryas (Hamadryas baboon).